Reading from the N-terminus, the 134-residue chain is RuBisCO chaperone RbcX (134 aa).

Positions 97–134 (SNGNHRRSLLERLTQVDSSSTDQTEPNPGESDTSEDSE) are disordered. The span at 111 to 122 (QVDSSSTDQTEP) shows a compositional bias: polar residues.

The protein belongs to the RbcX family. In terms of assembly, homodimer (RbcX2). Interacts with the exposed C-terminal peptide of RbcL ('Glu-459-Asp-468'); binds 2 RbcL peptides per RbcX2, stapling them into an RbcL2 dimer. A slightly longer peptide binds with a higher affinity, but no long-term stable interaction with RbcL is detected. Contacts a second RbcL monomer via its peripheral polar surface.

The protein localises to the carboxysome. The protein resides in the cytoplasm. An RbcL-specific chaperone. Required for assembly of the RbcL8 core, acting downstream of the major chaperonin (GroEL-GroES). Acts on newly folded RbcL, has a transient dynamic interaction with RbcL and is eventually displaced by RbcS. The central cleft of the RbcX homodimer (RbcX2) binds the C-terminus of an RbcL monomer, stabilizing the C-terminus and probably preventing its reassociation with chaperonin GroEL-ES. At the same time the peripheral region of RbcX2 binds a second RbcL monomer, bridging the RbcL homodimers in the correct orientation. The RbcX2(2)-bound RbcL dimers then assemble into the RbcL8 core (RbcL8-(RbcX2)8). RbcS binding triggers the release of RbcX2. Required for optimal reconstitution of RuBisCO into its RbcL8S8 holoenzyme form upon expression of rbcL-rbcS subunits in E.coli, and probably also in situ. A frameshift mutation that replaces half the protein reduces accumulation of both RbcL and RbcS subunits and halves activity of RuBisCO in situ and in E.coli. This Picosynechococcus sp. (strain ATCC 27264 / PCC 7002 / PR-6) (Agmenellum quadruplicatum) protein is RuBisCO chaperone RbcX.